A 448-amino-acid chain; its full sequence is Exodeoxyribonuclease 7 large subunit (448 aa).

Belongs to the XseA family. As to quaternary structure, heterooligomer composed of large and small subunits.

Its subcellular location is the cytoplasm. The enzyme catalyses Exonucleolytic cleavage in either 5'- to 3'- or 3'- to 5'-direction to yield nucleoside 5'-phosphates.. Its function is as follows. Bidirectionally degrades single-stranded DNA into large acid-insoluble oligonucleotides, which are then degraded further into small acid-soluble oligonucleotides. This is Exodeoxyribonuclease 7 large subunit from Shewanella baltica (strain OS155 / ATCC BAA-1091).